Reading from the N-terminus, the 254-residue chain is Cell wall biogenesis protein NCW2 (254 aa).

An N-terminal signal peptide occupies residues 1–17 (MKACSILFTTLITLAAA). Disordered stretches follow at residues 19 to 57 (KDSG…SAST), 111 to 143 (TSTA…DGPV), and 167 to 191 (ATTD…SSTK). The segment covering 27 to 42 (QNSEDSSQKESSNSQE) has biased composition (low complexity). Over residues 43 to 57 (ITPTTTKEAQESAST) the composition is skewed to polar residues. Low complexity predominate over residues 111–139 (TSTASVQPTGETSSGITNSASSSTTSTST). N-linked (GlcNAc...) asparagine glycosylation is present at Asn229. Asn232 carries GPI-anchor amidated asparagine lipidation. The propeptide at 233–254 (GAFAGTHIAYGAGAFAVGALLL) is removed in mature form.

The protein localises to the cell membrane. In terms of biological role, cell wall biogenesis protein that participates in the organization of the beta-glucan assembly. Involved in the mechanism responsible for cell tolerance to polyhexamethylene biguanide (PHMB), an antifungal agent. The sequence is that of Cell wall biogenesis protein NCW2 from Saccharomyces cerevisiae (strain ATCC 204508 / S288c) (Baker's yeast).